The following is a 160-amino-acid chain: MGKVKVERSEDADESVVASGDVTIKEEESYDDKLIFVNAIAKPMAGKKLAKKCYKLVKKAMKHKTFLRNGLKDVQTRLRKGETGICIFAGDVTPVDIMCHLPAVCEEKGIPYTYTPSRADLGAAMGVKRGTVALLVRQNEEYKDLYDEVKEELSALNIPV.

The residue at position 15 (Ser-15) is a Phosphoserine. The residue at position 23 (Thr-23) is a Phosphothreonine.

This sequence belongs to the eukaryotic ribosomal protein eL8 family. In terms of assembly, component of the box H/ACA small nucleolar ribonucleoprotein (H/ACA snoRNP) complex consisting of Nop60B, Gar1, NPH2 and Nop10, and associated with H/ACA-type snoRNAs.

Its subcellular location is the nucleus. The protein localises to the nucleolus. Component of the box H/ACA small nucleolar ribonucleoprotein (H/ACA snoRNP) complex, which catalyzes pseudouridylation of rRNA. This involves the isomerization of uridine such that the ribose is subsequently attached to C5, instead of the normal N1. Pseudouridine ('psi') residues may serve to stabilize the conformation of rRNAs. Required for ribosome biogenesis. H/ACA snoRNP complex-dependent ribosome biogenesis is important in female germline cell differentiation during oogenesis. The sequence is that of H/ACA ribonucleoprotein complex subunit 2 from Drosophila melanogaster (Fruit fly).